The sequence spans 307 residues: MVRHPEYQYLDLMAHLLENGDRRIDRTGVGTLSGLGAMMRFDLSKGQLPVFTTKRVYWKLAVKEMLWFLTGDTNIRNLLKQNVRIWTDWPLAAYRKATGEAISQEDFEARILADEAFAETWGDLGPVYGKQWRQWRDADGQVHDQIATVIDQLRHNPSSRRMIFHAWNVGELAGMALPPCHMVYQFHVSNLPSPGETKRPRLSLMVYQRSCDLFLGNPFNICQQAVLLAMVAQQVDMDVGELVWAGGDVHIYLNHLDAIREQLSREPRPFPTLRLLRRPDSIDDYRIEDFEVSDYEPHAAIAAEVAV.

Residues Arg26 and 160–161 (RR) each bind dUMP. Catalysis depends on Cys180, which acts as the Nucleophile. DUMP is bound by residues 209–212 (RSCD), Asn220, and 250–252 (HIY). Asp212 contacts (6R)-5,10-methylene-5,6,7,8-tetrahydrofolate. Ala306 is a binding site for (6R)-5,10-methylene-5,6,7,8-tetrahydrofolate.

This sequence belongs to the thymidylate synthase family. Bacterial-type ThyA subfamily. Homodimer.

Its subcellular location is the cytoplasm. It catalyses the reaction dUMP + (6R)-5,10-methylene-5,6,7,8-tetrahydrofolate = 7,8-dihydrofolate + dTMP. It participates in pyrimidine metabolism; dTTP biosynthesis. Catalyzes the reductive methylation of 2'-deoxyuridine-5'-monophosphate (dUMP) to 2'-deoxythymidine-5'-monophosphate (dTMP) while utilizing 5,10-methylenetetrahydrofolate (mTHF) as the methyl donor and reductant in the reaction, yielding dihydrofolate (DHF) as a by-product. This enzymatic reaction provides an intracellular de novo source of dTMP, an essential precursor for DNA biosynthesis. The sequence is that of Thymidylate synthase from Rhizobium rhizogenes (strain K84 / ATCC BAA-868) (Agrobacterium radiobacter).